Here is a 453-residue protein sequence, read N- to C-terminus: MEQGESLRIRVVMGKDRISELPDALLIKILSFLPTKIVVATSVFSKQWRPLWKLVPNLEFDSEDYDDKEQYTFSEIVCKSFLSHKAPVLESFRLEFESEKVDPVDIGLWVGIAFSRHLRELVLVAADTGTGTAFKFPSSLCTCNTLETLRLVLLILVDISSPVVMKSLRTLHLELVSYKDESSIRNLLSGCPILEELLVIRGEDSDIEVFTIDEVPSLKRLTINDDHDGQEFWGYVINAPSLKYLLIEDLRCPGFCLNAPELMEANIFDGTSITNDNFLGYLTSVKRLLLNLSPWKITYPTGSIFYQLVSLEMYTREIDWWDLLTLMLEHSPKLQVLKLTDNCVKFHKNGLPGGKWNEPKYVPECLLSHLETFVWRRFDWGREEEKEIATYILKNARRLNKATFSTNPVNSEELDKLKERRKVHNELDGVVRASNSCQFVFKFDTSYHVSDSS.

The region spanning 15–68 (KDRISELPDALLIKILSFLPTKIVVATSVFSKQWRPLWKLVPNLEFDSEDYDDK) is the F-box domain. 6 LRR repeats span residues 89-111 (LESF…LWVG), 165-190 (MKSL…LLSG), 215-239 (VPSL…VINA), 247-270 (IEDL…IFDG), 282-307 (LTSV…IFYQ), and 331-358 (SPKL…KWNE). The region spanning 355-406 (KWNEPKYVPECLLSHLETFVWRRFDWGREEEKEIATYILKNARRLNKATFST) is the FBD domain.

The polypeptide is F-box/FBD/LRR-repeat protein At4g00160 (Arabidopsis thaliana (Mouse-ear cress)).